The primary structure comprises 402 residues: Arginine biosynthesis bifunctional protein ArgJ (402 aa).

Substrate contacts are provided by T152, K178, T189, E275, N397, and T402. The active-site Nucleophile is T189.

It belongs to the ArgJ family. In terms of assembly, heterotetramer of two alpha and two beta chains.

The protein localises to the cytoplasm. The enzyme catalyses N(2)-acetyl-L-ornithine + L-glutamate = N-acetyl-L-glutamate + L-ornithine. It carries out the reaction L-glutamate + acetyl-CoA = N-acetyl-L-glutamate + CoA + H(+). The protein operates within amino-acid biosynthesis; L-arginine biosynthesis; L-ornithine and N-acetyl-L-glutamate from L-glutamate and N(2)-acetyl-L-ornithine (cyclic): step 1/1. It participates in amino-acid biosynthesis; L-arginine biosynthesis; N(2)-acetyl-L-ornithine from L-glutamate: step 1/4. Functionally, catalyzes two activities which are involved in the cyclic version of arginine biosynthesis: the synthesis of N-acetylglutamate from glutamate and acetyl-CoA as the acetyl donor, and of ornithine by transacetylation between N(2)-acetylornithine and glutamate. This is Arginine biosynthesis bifunctional protein ArgJ from Lactiplantibacillus plantarum (strain ATCC BAA-793 / NCIMB 8826 / WCFS1) (Lactobacillus plantarum).